A 158-amino-acid chain; its full sequence is Phosphopantetheine adenylyltransferase (158 aa).

Substrate is bound at residue Ser-8. ATP contacts are provided by residues 8–9 (SF) and His-16. Substrate-binding residues include Lys-40, Thr-72, and Arg-86. ATP is bound by residues 87-89 (GLR), Glu-97, and 122-128 (HSFLSSS).

Belongs to the bacterial CoaD family. In terms of assembly, homohexamer. The cofactor is Mg(2+).

It localises to the cytoplasm. It catalyses the reaction (R)-4'-phosphopantetheine + ATP + H(+) = 3'-dephospho-CoA + diphosphate. It participates in cofactor biosynthesis; coenzyme A biosynthesis; CoA from (R)-pantothenate: step 4/5. Its function is as follows. Reversibly transfers an adenylyl group from ATP to 4'-phosphopantetheine, yielding dephospho-CoA (dPCoA) and pyrophosphate. This is Phosphopantetheine adenylyltransferase from Prochlorococcus marinus (strain NATL2A).